We begin with the raw amino-acid sequence, 315 residues long: Jacalin-related lectin 10 (315 aa).

The signal sequence occupies residues 1-23 (MVIIYIFLFLSSAIIDSTGLAKA). Jacalin-type lectin domains lie at 24-165 (QKLD…YLTT) and 168-312 (PTKS…YFSP).

The protein belongs to the jacalin lectin family.

In Arabidopsis thaliana (Mouse-ear cress), this protein is Jacalin-related lectin 10 (JAL10).